The sequence spans 702 residues: Pseudouridylate synthase PUS7L (702 aa).

Residue Ser-79 is modified to Phosphoserine. Residues 84–116 are disordered; sequence NSEGAADLPGCSDGDRSHQSDSEKENSVNSVTS. Basic and acidic residues predominate over residues 96 to 109; sequence DGDRSHQSDSEKEN. Asp-339 (nucleophile) is an active-site residue. One can recognise a TRUD domain in the interval 424–646; the sequence is GFVNYYGPQR…PGCYRHIVKH (223 aa).

This sequence belongs to the pseudouridine synthase TruD family.

The catalysed reaction is a uridine in mRNA = a pseudouridine in mRNA. Pseudouridine synthase that catalyzes pseudouridylation of mRNAs. This Mus musculus (Mouse) protein is Pseudouridylate synthase PUS7L.